The sequence spans 154 residues: Putative pre-16S rRNA nuclease (154 aa).

This sequence belongs to the YqgF nuclease family.

It localises to the cytoplasm. In terms of biological role, could be a nuclease involved in processing of the 5'-end of pre-16S rRNA. The protein is Putative pre-16S rRNA nuclease of Rickettsia canadensis (strain McKiel).